The chain runs to 271 residues: Formamidopyrimidine-DNA glycosylase (271 aa).

The Schiff-base intermediate with DNA role is filled by Pro-2. The active-site Proton donor is the Glu-3. Lys-58 (proton donor; for beta-elimination activity) is an active-site residue. The DNA site is built by His-91, Arg-110, and Arg-152. The FPG-type zinc finger occupies 237-271; it reads WVYGRAGQSCRQCGELVSKTRQGQRSTFFCARCQH. The active-site Proton donor; for delta-elimination activity is the Arg-261.

Belongs to the FPG family. Monomer. It depends on Zn(2+) as a cofactor.

The catalysed reaction is Hydrolysis of DNA containing ring-opened 7-methylguanine residues, releasing 2,6-diamino-4-hydroxy-5-(N-methyl)formamidopyrimidine.. It catalyses the reaction 2'-deoxyribonucleotide-(2'-deoxyribose 5'-phosphate)-2'-deoxyribonucleotide-DNA = a 3'-end 2'-deoxyribonucleotide-(2,3-dehydro-2,3-deoxyribose 5'-phosphate)-DNA + a 5'-end 5'-phospho-2'-deoxyribonucleoside-DNA + H(+). Functionally, involved in base excision repair of DNA damaged by oxidation or by mutagenic agents. Acts as a DNA glycosylase that recognizes and removes damaged bases. Has a preference for oxidized purines, such as 7,8-dihydro-8-oxoguanine (8-oxoG). Has AP (apurinic/apyrimidinic) lyase activity and introduces nicks in the DNA strand. Cleaves the DNA backbone by beta-delta elimination to generate a single-strand break at the site of the removed base with both 3'- and 5'-phosphates. In Nitrosomonas europaea (strain ATCC 19718 / CIP 103999 / KCTC 2705 / NBRC 14298), this protein is Formamidopyrimidine-DNA glycosylase.